The primary structure comprises 334 residues: Protein OPG181 (334 aa).

This sequence belongs to the orthopoxvirus OPG181 family.

The chain is Protein OPG181 (OPG181) from Bos taurus (Bovine).